Consider the following 192-residue polypeptide: MDNQFIFKYSWETLPKKWVKKIEKSEHGNRFDTNTDYLFQLLCFLKLHTYTRFQVLIDICGVDYPSRKRRFEVVYNLLSTRYNSRIRLQTSADEVTRISSVVSLFPSAGWWEREVWDMFGVSFINHPDLRRILTDYGFEGHPLRKDFPLSGYVEVRYDDPEKRVVSEPIEMTQEFRYFDFASPWEQRNGNEG.

Belongs to the complex I 30 kDa subunit family. Complex I is composed of about 45 different subunits. This is a component of the iron-sulfur (IP) fragment of the enzyme.

It is found in the mitochondrion inner membrane. It carries out the reaction a ubiquinone + NADH + 5 H(+)(in) = a ubiquinol + NAD(+) + 4 H(+)(out). Its function is as follows. Core subunit of the mitochondrial membrane respiratory chain NADH dehydrogenase (Complex I) that is believed to belong to the minimal assembly required for catalysis. Complex I functions in the transfer of electrons from NADH to the respiratory chain. The immediate electron acceptor for the enzyme is believed to be ubiquinone. This Beta trigyna (Caucasian wild beet) protein is NADH dehydrogenase [ubiquinone] iron-sulfur protein 3 (NAD9).